We begin with the raw amino-acid sequence, 368 residues long: 3-dehydroquinate synthase (368 aa).

Residues 69–74 (DGEAYK), 103–107 (GVIGD), 127–128 (TT), K140, and K149 contribute to the NAD(+) site. Residues E182, H245, and H262 each contribute to the Zn(2+) site.

Belongs to the sugar phosphate cyclases superfamily. Dehydroquinate synthase family. It depends on Co(2+) as a cofactor. The cofactor is Zn(2+). NAD(+) serves as cofactor.

It localises to the cytoplasm. It catalyses the reaction 7-phospho-2-dehydro-3-deoxy-D-arabino-heptonate = 3-dehydroquinate + phosphate. The protein operates within metabolic intermediate biosynthesis; chorismate biosynthesis; chorismate from D-erythrose 4-phosphate and phosphoenolpyruvate: step 2/7. Catalyzes the conversion of 3-deoxy-D-arabino-heptulosonate 7-phosphate (DAHP) to dehydroquinate (DHQ). This is 3-dehydroquinate synthase from Pseudomonas paraeruginosa (strain DSM 24068 / PA7) (Pseudomonas aeruginosa (strain PA7)).